The sequence spans 1034 residues: Vacuolar membrane protease (1034 aa).

Residues 1-11 (MAVKNPFGFTT) lie on the Cytoplasmic side of the membrane. Residues 12 to 32 (GPVTFWLIVVYAAFLIPLVWI) traverse the membrane as a helical segment. The Vacuolar segment spans residues 33–418 (HESVPAVPSS…GFAILELRGL (386 aa)). N-linked (GlcNAc...) asparagine glycosylation is found at Asn-51 and Asn-141. Residues His-200 and Asp-212 each contribute to the Zn(2+) site. Residue Glu-246 is the Proton acceptor of the active site. Residues Glu-247, Glu-272, and His-345 each contribute to the Zn(2+) site. A helical transmembrane segment spans residues 419–439 (FAWTLTLLIVSPLVLALVTYI). Over 440–470 (LSRKDKYYFFSRKVTADEDDEPVSVGGWKGF) the chain is Cytoplasmic. Residues 471–491 (FRFPFALVLSASITVLSAFLI) traverse the membrane as a helical segment. Topologically, residues 492–497 (RRVNPH) are vacuolar. The chain crosses the membrane as a helical span at residues 498–518 (IIYSSPYAVWAMTLSLFFLVF). At 519-536 (WTIAKGASVVRPSALQRG) the chain is on the cytoplasmic side. A helical membrane pass occupies residues 537–557 (YAHIWLFVISWVILVAVTAAA). Topologically, residues 558-567 (DRFKIASGYP) are vacuolar. A helical transmembrane segment spans residues 568-588 (FAFFHSAVFVSALISLCDLFA). Residues 589-703 (LPSKQEFARN…NLPSWTWFFQ (115 aa)) are Cytoplasmic-facing. The tract at residues 623 to 653 (HSHVEDDVAEEPTETTPLRSGENGNGNNGTI) is disordered. Residues 704–724 (LLLLAPITITVFLQIALFIVS) traverse the membrane as a helical segment. The Vacuolar segment spans residues 725–736 (AIHSAAADGNDP). Residues 737-757 (ILVYAAIAAFSIIILLPATPF) traverse the membrane as a helical segment. The Cytoplasmic portion of the chain corresponds to 758 to 762 (IHRAS). Residues 763–783 (FYLPLFLLLVFFVTLIYNLVA) traverse the membrane as a helical segment. The Vacuolar portion of the chain corresponds to 784-1034 (FPFSAENRLK…LVEGRKKFRA (251 aa)). N-linked (GlcNAc...) asparagine glycosylation is found at Asn-805, Asn-866, and Asn-879.

Belongs to the peptidase M28 family. The cofactor is Zn(2+).

The protein localises to the vacuole membrane. In terms of biological role, may be involved in vacuolar sorting and osmoregulation. This is Vacuolar membrane protease from Colletotrichum graminicola (strain M1.001 / M2 / FGSC 10212) (Maize anthracnose fungus).